We begin with the raw amino-acid sequence, 193 residues long: Holliday junction branch migration complex subunit RuvA (193 aa).

The segment at 1–64 (MIGRIAGTLL…EDAHLLFGFA (64 aa)) is domain I. A domain II region spans residues 65-144 (TATERNTFRE…DLGHAPGATP (80 aa)). Positions 145–151 (LADSAVD) are flexible linker. Residues 151–193 (DILNALLALGYSEKEAAQAIKQVPAGTGVSDGIKLALKALSKG) form a domain III region.

This sequence belongs to the RuvA family. Homotetramer. Forms an RuvA(8)-RuvB(12)-Holliday junction (HJ) complex. HJ DNA is sandwiched between 2 RuvA tetramers; dsDNA enters through RuvA and exits via RuvB. An RuvB hexamer assembles on each DNA strand where it exits the tetramer. Each RuvB hexamer is contacted by two RuvA subunits (via domain III) on 2 adjacent RuvB subunits; this complex drives branch migration. In the full resolvosome a probable DNA-RuvA(4)-RuvB(12)-RuvC(2) complex forms which resolves the HJ.

It localises to the cytoplasm. The RuvA-RuvB-RuvC complex processes Holliday junction (HJ) DNA during genetic recombination and DNA repair, while the RuvA-RuvB complex plays an important role in the rescue of blocked DNA replication forks via replication fork reversal (RFR). RuvA specifically binds to HJ cruciform DNA, conferring on it an open structure. The RuvB hexamer acts as an ATP-dependent pump, pulling dsDNA into and through the RuvAB complex. HJ branch migration allows RuvC to scan DNA until it finds its consensus sequence, where it cleaves and resolves the cruciform DNA. This Cupriavidus metallidurans (strain ATCC 43123 / DSM 2839 / NBRC 102507 / CH34) (Ralstonia metallidurans) protein is Holliday junction branch migration complex subunit RuvA.